The chain runs to 192 residues: Peptidyl-tRNA hydrolase (192 aa).

Position 17 (Tyr17) interacts with tRNA. His22 acts as the Proton acceptor in catalysis. 3 residues coordinate tRNA: Phe68, Asn70, and Asn116.

Belongs to the PTH family. Monomer.

The protein resides in the cytoplasm. It catalyses the reaction an N-acyl-L-alpha-aminoacyl-tRNA + H2O = an N-acyl-L-amino acid + a tRNA + H(+). In terms of biological role, hydrolyzes ribosome-free peptidyl-tRNAs (with 1 or more amino acids incorporated), which drop off the ribosome during protein synthesis, or as a result of ribosome stalling. Functionally, catalyzes the release of premature peptidyl moieties from peptidyl-tRNA molecules trapped in stalled 50S ribosomal subunits, and thus maintains levels of free tRNAs and 50S ribosomes. In Xylella fastidiosa (strain M12), this protein is Peptidyl-tRNA hydrolase.